Here is a 347-residue protein sequence, read N- to C-terminus: MRIEEDLKLGFKDVLIRPKRSTLKSRSDVELERQFTFKYSGQTWSGVPIIAANMDTVGTFEMAQALAGFDILTAVHKHYTVEEWAAFINTASADVLKHVMVSTGTSDADFEKTVQILALNPALNFVCIDVANGYSEHFVQFVAKAREAWPTKTICAGNVVTGEMCEELILSGADIVKVGIGPGSVCTTRVKTGVGYPQLSAVIECADAAHGLGGMIVSDGGCTMPGDVAKAFGGGADFVMLGGMLAGHEESGGSVVEENGEKFMLFYGMSSESAMNRHVGGVAKYRAAEGKTVKLPLRGPVGNTARDILGGLRSACTYVGASRLKELTKRTTFIRVQEQENRIFNSL.

An NADP(+)-binding site is contributed by 108–131 (ADFEKTVQILALNPALNFVCIDVA). K(+) contacts are provided by glycine 181 and glycine 183. The active-site Thioimidate intermediate is cysteine 186. Residue 216–239 (IVSDGGCTMPGDVAKAFGGGADFV) coordinates NADP(+).

Belongs to the IMPDH/GMPR family. GuaC type 1 subfamily. In terms of assembly, homotetramer.

The enzyme catalyses IMP + NH4(+) + NADP(+) = GMP + NADPH + 2 H(+). Catalyzes the irreversible NADPH-dependent deamination of GMP to IMP. It functions in the conversion of nucleobase, nucleoside and nucleotide derivatives of G to A nucleotides, and in maintaining the intracellular balance of A and G nucleotides. This Salmonella paratyphi C (strain RKS4594) protein is GMP reductase.